Reading from the N-terminus, the 333-residue chain is Minor fimbrium tip subunit MfA4 (333 aa).

Residues 1 to 18 (MKKYLLYASLLTSVLLFS) form the signal peptide. A lipid anchor (N-palmitoyl cysteine) is attached at Cys-19. A lipid anchor (S-diacylglycerol cysteine) is attached at Cys-19. Positions 19-53 (CSKNNPSEPVEDRSIEISIRVDDFTKTGETVRYER) are excised as a propeptide.

Belongs to the bacteroidetes fimbrillin superfamily. FimA/Mfa1 family. In terms of assembly, component of the fimbrium tip. Minor fimbriae are composed of a structural subunit, most often Mfa1, and the accessory subunits Mfa3, Mfa4 and Mfa5. Mfa4 is required for Mfa3 and Mfa5 insertion into the fimbrium. Fimbrium assembly occurs by linear, head-to-tail oligomerization of fimbrial subunits. This is mediated via insertion of a C-terminal beta-strand from one subunit into a groove in the N-terminal domain of the following subunit.

The protein localises to the fimbrium. The protein resides in the cell outer membrane. Its function is as follows. Tip subunit of the minor fimbriae. These filamentous pili are attached to the cell surface; they mediate biofilm formation, adhesion onto host cells and onto other bacteria that are part of the oral microbiome. They play an important role in invasion of periodontal tissues and are recognized as major virulence factors. This Porphyromonas gingivalis (strain ATCC 33277 / DSM 20709 / CIP 103683 / JCM 12257 / NCTC 11834 / 2561) protein is Minor fimbrium tip subunit MfA4.